Here is a 340-residue protein sequence, read N- to C-terminus: Tryptophan--tRNA ligase (340 aa).

ATP-binding positions include 11 to 13 (RPT) and 19 to 20 (GH). Positions 12-20 (PTGKLHLGH) match the 'HIGH' region motif. Residue D140 participates in L-tryptophan binding. ATP-binding positions include 152-154 (GND), L194, and 202-206 (KMSKS). Residues 202–206 (KMSKS) carry the 'KMSKS' region motif.

This sequence belongs to the class-I aminoacyl-tRNA synthetase family. In terms of assembly, homodimer.

The protein resides in the cytoplasm. The enzyme catalyses tRNA(Trp) + L-tryptophan + ATP = L-tryptophyl-tRNA(Trp) + AMP + diphosphate + H(+). Catalyzes the attachment of tryptophan to tRNA(Trp). The protein is Tryptophan--tRNA ligase of Streptococcus mutans serotype c (strain ATCC 700610 / UA159).